The sequence spans 296 residues: NAD kinase (296 aa).

Asp73 (proton acceptor) is an active-site residue. NAD(+)-binding positions include 73–74 (DG), Lys78, 151–152 (NE), Arg178, Asp180, and 191–196 (TAHAMS).

The protein belongs to the NAD kinase family. Requires a divalent metal cation as cofactor.

The protein localises to the cytoplasm. The enzyme catalyses NAD(+) + ATP = ADP + NADP(+) + H(+). Its function is as follows. Involved in the regulation of the intracellular balance of NAD and NADP, and is a key enzyme in the biosynthesis of NADP. Catalyzes specifically the phosphorylation on 2'-hydroxyl of the adenosine moiety of NAD to yield NADP. In Francisella tularensis subsp. mediasiatica (strain FSC147), this protein is NAD kinase.